Reading from the N-terminus, the 396-residue chain is 1-deoxy-D-xylulose 5-phosphate reductoisomerase (396 aa).

NADPH is bound by residues Thr-15, Gly-16, Ser-17, Ile-18, Gly-41, and Asn-129. Lys-130 provides a ligand contact to 1-deoxy-D-xylulose 5-phosphate. Glu-131 contributes to the NADPH binding site. Position 155 (Asp-155) interacts with Mn(2+). The 1-deoxy-D-xylulose 5-phosphate site is built by Ser-156, Glu-157, Ser-182, and His-205. Residue Glu-157 coordinates Mn(2+). Gly-211 contributes to the NADPH binding site. Ser-218, Asn-223, Lys-224, and Glu-227 together coordinate 1-deoxy-D-xylulose 5-phosphate. Residue Glu-227 coordinates Mn(2+).

The protein belongs to the DXR family. Mg(2+) is required as a cofactor. The cofactor is Mn(2+).

The enzyme catalyses 2-C-methyl-D-erythritol 4-phosphate + NADP(+) = 1-deoxy-D-xylulose 5-phosphate + NADPH + H(+). The protein operates within isoprenoid biosynthesis; isopentenyl diphosphate biosynthesis via DXP pathway; isopentenyl diphosphate from 1-deoxy-D-xylulose 5-phosphate: step 1/6. Functionally, catalyzes the NADPH-dependent rearrangement and reduction of 1-deoxy-D-xylulose-5-phosphate (DXP) to 2-C-methyl-D-erythritol 4-phosphate (MEP). This chain is 1-deoxy-D-xylulose 5-phosphate reductoisomerase, found in Xanthomonas euvesicatoria pv. vesicatoria (strain 85-10) (Xanthomonas campestris pv. vesicatoria).